The sequence spans 541 residues: Calcium-dependent protein kinase 9 (541 aa).

The segment at 1 to 75 (MGNCFAKNHG…PGLSPKTTTK (75 aa)) is disordered. Glycine 2 carries the N-myristoyl glycine lipid modification. The span at 14 to 54 (PQQNGNTTRSVEVGVTNQDPPSYTPQARTTQQPEKPGSVNS) shows a compositional bias: polar residues. The residue at position 69 (serine 69) is a Phosphoserine. A Protein kinase domain is found at 91–349 (YTLGKELGRG…AADVLQHPWL (259 aa)). ATP is bound by residues 97–105 (LGRGQFGVT) and lysine 120. Aspartate 215 (proton acceptor) is an active-site residue. A Phosphoserine modification is found at serine 255. The interval 355-385 (ASDKPIDSAVLSRMKQFRAMNKLKKLALKVI) is autoinhibitory domain. EF-hand domains lie at 392–427 (EEIQGLKAMFANIDTDNSGTITYEELKEGLAKLGSK), 428–463 (LTEAEVKQLMDAADVDGNGSIDYIEFITATMHRHRL), 464–499 (ESNENLYKAFQHFDKDSSGYITIDELESALKEYGMG), and 500–534 (DDATIKEVLSDVDSDNDGRINYEEFCAMMRSGNPQ). Ca(2+)-binding residues include aspartate 405, aspartate 407, serine 409, threonine 411, glutamate 416, aspartate 441, aspartate 443, asparagine 445, serine 447, glutamate 452, aspartate 477, aspartate 479, serine 481, tyrosine 483, glutamate 488, aspartate 512, aspartate 514, aspartate 516, arginine 518, and glutamate 523.

The protein belongs to the protein kinase superfamily. Ser/Thr protein kinase family. CDPK subfamily.

The protein localises to the cell membrane. The catalysed reaction is L-seryl-[protein] + ATP = O-phospho-L-seryl-[protein] + ADP + H(+). It carries out the reaction L-threonyl-[protein] + ATP = O-phospho-L-threonyl-[protein] + ADP + H(+). Its activity is regulated as follows. Activated by calcium. Autophosphorylation may play an important role in the regulation of the kinase activity. Its function is as follows. May play a role in signal transduction pathways that involve calcium as a second messenger. In Arabidopsis thaliana (Mouse-ear cress), this protein is Calcium-dependent protein kinase 9 (CPK9).